We begin with the raw amino-acid sequence, 448 residues long: Methylenetetrahydrofolate--tRNA-(uracil-5-)-methyltransferase TrmFO (448 aa).

10–15 serves as a coordination point for FAD; the sequence is GAGLAG.

This sequence belongs to the MnmG family. TrmFO subfamily. The cofactor is FAD.

The protein resides in the cytoplasm. It catalyses the reaction uridine(54) in tRNA + (6R)-5,10-methylene-5,6,7,8-tetrahydrofolate + NADH + H(+) = 5-methyluridine(54) in tRNA + (6S)-5,6,7,8-tetrahydrofolate + NAD(+). The catalysed reaction is uridine(54) in tRNA + (6R)-5,10-methylene-5,6,7,8-tetrahydrofolate + NADPH + H(+) = 5-methyluridine(54) in tRNA + (6S)-5,6,7,8-tetrahydrofolate + NADP(+). Catalyzes the folate-dependent formation of 5-methyl-uridine at position 54 (M-5-U54) in all tRNAs. This is Methylenetetrahydrofolate--tRNA-(uracil-5-)-methyltransferase TrmFO from Lactococcus lactis subsp. cremoris (strain MG1363).